The sequence spans 1256 residues: Neuronal cell adhesion molecule (1256 aa).

Positions 1-29 (MQLKIMPKKKHLSAGGVPLILFLCQMISA) are cleaved as a signal peptide. Residues 30-1119 (LDVPLDLVQP…ASRQVDIATQ (1090 aa)) are Extracellular-facing. 2 Ig-like C2-type domains span residues 40–128 (PTIT…AAVS) and 135–229 (PSRS…QPIS). Intrachain disulfides connect C62–C117 and C161–C212. N77 is a glycosylation site (N-linked (GlcNAc...) asparagine). N-linked (GlcNAc...) asparagine glycosylation is found at N217, N239, N245, N270, N308, and N371. Ig-like C2-type domains lie at 261–350 (PPTF…ISVT), 355–442 (PYWI…AFVN), 448–535 (PRIL…VHLE), and 539–626 (PTRI…AVLR). C286 and C334 are joined by a disulfide. The cysteines at positions 376 and 426 are disulfide-linked. N-linked (GlcNAc...) asparagine glycans are attached at residues N427 and N501. Cystine bridges form between C470-C519 and C561-C610. N-linked (GlcNAc...) asparagine glycosylation is found at N613, N710, N796, N852, N987, N1003, N1013, and N1067. Fibronectin type-III domains follow at residues 643–738 (PPFD…TKAA), 740–837 (PDQN…SGED), 842–944 (APGN…TPEG), and 948–1045 (APSS…VDEA). The helical transmembrane segment at 1120 to 1142 (GWFIGLMCAVALLILILLIVCFI) threads the bilayer. Residues 1143–1256 (RRNKGGKYPV…SPVNAMNSFV (114 aa)) lie on the Cytoplasmic side of the membrane. Residues 1151-1171 (PVKEKEDAHADPEIQPMKEDD) show a composition bias toward basic and acidic residues. A disordered region spans residues 1151 to 1256 (PVKEKEDAHA…SPVNAMNSFV (106 aa)). Phosphothreonine is present on T1173. Residue Y1177 is modified to Phosphotyrosine. S1178 bears the Phosphoserine mark. Residues 1193 to 1202 (PSDRTVKKED) are compositionally biased toward basic and acidic residues. Residues S1203, S1206, S1223, S1242, S1243, and S1247 each carry the phosphoserine modification. Residues 1240-1256 (NESSEAPSPVNAMNSFV) are compositionally biased toward polar residues.

This sequence belongs to the immunoglobulin superfamily. L1/neurofascin/NgCAM family. In terms of assembly, constituent of a NFASC/NRCAM/ankyrin-G complex. Detected in a complex with CNTN1 and PTPRB. Interacts with GLDN/gliomedin and MYOC. Detected in sciatic nerve. Detected in brain, especially in the cerebellum Purkinje cell layer, inner granule cell layer and molecular layer (at protein level). Detected in neurons and Schwann cells.

It localises to the cell membrane. The protein localises to the cell projection. It is found in the axon. The protein resides in the secreted. Cell adhesion protein that is required for normal responses to cell-cell contacts in brain and in the peripheral nervous system. Plays a role in neurite outgrowth in response to contactin binding. Plays a role in mediating cell-cell contacts between Schwann cells and axons. Plays a role in the formation and maintenance of the nodes of Ranvier on myelinated axons. Nodes of Ranvier contain clustered sodium channels that are crucial for the saltatory propagation of action potentials along myelinated axons. During development, nodes of Ranvier are formed by the fusion of two heminodes. Required for normal clustering of sodium channels at heminodes; not required for the formation of mature nodes with normal sodium channel clusters. Required, together with GLDN, for maintaining NFASC and sodium channel clusters at mature nodes of Ranvier. The protein is Neuronal cell adhesion molecule (Nrcam) of Mus musculus (Mouse).